Consider the following 422-residue polypeptide: MRIRVDLKVDEIPRYWYNVLSDLPFKLDPPLDPKTKQPISPDMLSAIFPMPLIEQEVTDKREIPIPEPVLEEYAVFRPTPLFRATYLEEFLQTPARIYYKYEGASPTGSHKTNTALAQAYYNKISGTERLVTETGAGQWGSALCYSGAKFGLKVNVFMVKISYEQKPMRKYLMRLFDGDVVPSPSEKTSFGKSILASNSENPGSLGIAISEAIEITLSDSRTKYSLGSVLNHVLLHQTVIGLELKKQLEVLGEKPDVILGCHGGGSNFGGTVLPFIPDKLSGKEIKFVACEPTACPSLTRGRYDYDYGDTAGMTPLLKMYTLGKDFIPPKIHAGGLRYHGAAPIISRLVKEGLIEAVAFDQDEIFSAAKLFAKLEGIVPAPESSYAIAGAIREAKKAKEHNIPRVVVFNLSGHGLFDLTAYI.

An N6-(pyridoxal phosphate)lysine modification is found at Lys-111.

The protein belongs to the TrpB family. Tetramer of two alpha and two beta chains. It depends on pyridoxal 5'-phosphate as a cofactor.

It carries out the reaction (1S,2R)-1-C-(indol-3-yl)glycerol 3-phosphate + L-serine = D-glyceraldehyde 3-phosphate + L-tryptophan + H2O. It participates in amino-acid biosynthesis; L-tryptophan biosynthesis; L-tryptophan from chorismate: step 5/5. Its function is as follows. The beta subunit is responsible for the synthesis of L-tryptophan from indole and L-serine. The sequence is that of Tryptophan synthase beta chain from Pseudothermotoga lettingae (strain ATCC BAA-301 / DSM 14385 / NBRC 107922 / TMO) (Thermotoga lettingae).